A 263-amino-acid chain; its full sequence is Antigen 10-3 (263 aa).

Residues 1-21 form the signal peptide; sequence MNIYLIGILCIVGLIISQGST. The disordered stretch occupies residues 70–207; sequence GNKKDKQPTQ…QINDGTSDKP (138 aa). Residues 78–90 show a composition bias toward low complexity; sequence TQKTTPKPTTPKQ. 5 repeat units span residues 81 to 107, 108 to 134, 135 to 161, 162 to 188, and 189 to 206. The interval 81–189 is 5 X 27 AA tandem repeats; sequence TTPKPTTPKQ…TSDTHTIKRT (109 aa). Composition is skewed to basic and acidic residues over residues 95–104, 122–131, 149–158, and 176–185; these read TSDKTSDTHT.

This chain is Antigen 10-3, found in Schistosoma mansoni (Blood fluke).